A 211-amino-acid polypeptide reads, in one-letter code: Mitotic spindle assembly checkpoint protein MAD2B (211 aa).

An HORMA domain is found at 13–203 (QVVADILCEF…SDILKMQLYV (191 aa)).

As to quaternary structure, homooligomer. Interacts with rev1. Interacts with rev3l. Interacts with fzr1 (in complex with the anaphase promoting complex APC). May interact with cdc20.

It localises to the nucleus. The protein resides in the cytoplasm. The protein localises to the cytoskeleton. It is found in the spindle. Functionally, adapter protein able to interact with different proteins and involved in different biological processes. Mediates the interaction between the error-prone DNA polymerase zeta catalytic subunit rev3l and the inserter polymerase rev1, thereby mediating the second polymerase switching in translesion DNA synthesis. Translesion DNA synthesis releases the replication blockade of replicative polymerases, stalled in presence of DNA lesions. May also play a role in signal transduction in response to DNA damage. May regulate the activation of the anaphase promoting complex APC thereby regulating progression through the cell cycle. Through transcriptional regulation may play a role in epithelial-mesenchymal transdifferentiation. In terms of biological role, inhibits the fzr1-APC complex activity during mitosis. Plays a role in progression of mitosis. The sequence is that of Mitotic spindle assembly checkpoint protein MAD2B (mad2l2) from Xenopus laevis (African clawed frog).